Consider the following 584-residue polypeptide: Insulin-like growth factor 2 mRNA-binding protein 3 (584 aa).

RRM domains lie at 2-75 and 81-156; these read NKLY…HSVP and RKLQ…YIPD. Residues 160 to 199 are disordered; sequence AQQPPQQHPQGRRGFGQRGPPRQGSPSATTRQKPQSDVPL. Over residues 184 to 194 the composition is skewed to polar residues; sequence SPSATTRQKPQ. 4 KH domains span residues 196-261, 277-344, 409-474, and 491-557; these read DVPL…CKII, EIPL…EEEI, SETV…QGRI, and KLEA…QRKI.

It belongs to the RRM IMP/VICKZ family. Homodimer and multimer.

The protein resides in the cytoplasm. It is found in the nucleus. It localises to the P-body. The protein localises to the stress granule. Functionally, RNA-binding factor that may recruit target transcripts to cytoplasmic protein-RNA complexes (mRNPs). This transcript 'caging' into mRNPs allows mRNA transport and transient storage. It also modulates the rate and location at which target transcripts encounter the translational apparatus and shields them from endonuclease attacks or microRNA-mediated degradation. Preferentially binds to N6-methyladenosine (m6A)-containing mRNAs and increases their stability. This is Insulin-like growth factor 2 mRNA-binding protein 3 (IGF2BP3) from Gallus gallus (Chicken).